We begin with the raw amino-acid sequence, 262 residues long: MYIFKIAYDGRLSFQTQPHGETVCDKISNALLDCGYLDNKDRVPLYHGGRTDRGVSALGNYIVYEMDKKPVLPRVQSKLKWDGVWVLGCKEIDTFPEIEYRHYQYNLPNKNHDVELMKKASEKLIGTHYFQNLSKRDKSKVKDPVRTLYNIKISSNDYFITIDIFGESFLWNMVRRIIRLLSDIGKHKIKDPEKFIELILSEDYSKGYPPSPAEGLILVDVKTNIDVDIDSYVLRMLKNSWEKSLNNSLMRLGLCKTVLSKT.

Catalysis depends on Asp-52, which acts as the Nucleophile. Position 103 (Tyr-103) interacts with substrate.

This sequence belongs to the tRNA pseudouridine synthase TruA family.

The enzyme catalyses uridine(38/39/40) in tRNA = pseudouridine(38/39/40) in tRNA. Formation of pseudouridine at positions 38, 39 and 40 in the anticodon stem and loop of transfer RNAs. The protein is tRNA pseudouridine synthase A of Methanococcus maripaludis (strain C6 / ATCC BAA-1332).